Reading from the N-terminus, the 362-residue chain is Carbamoyl phosphate synthase small chain (362 aa).

A CPSase region spans residues 1-169 (MGKRLLILED…TKTAYPAPGV (169 aa)). Ser-46, Gly-220, and Gly-222 together coordinate L-glutamine. The Glutamine amidotransferase type-1 domain occupies 172–358 (NIVLVDFGLK…LELIDAFQLE (187 aa)). Cys-247 serves as the catalytic Nucleophile. 5 residues coordinate L-glutamine: Met-248, Gln-251, Asn-289, Gly-291, and Tyr-292. Residues His-331 and Asp-333 contribute to the active site.

This sequence belongs to the CarA family. Composed of two chains; the small (or glutamine) chain promotes the hydrolysis of glutamine to ammonia, which is used by the large (or ammonia) chain to synthesize carbamoyl phosphate. Tetramer of heterodimers (alpha,beta)4.

The enzyme catalyses hydrogencarbonate + L-glutamine + 2 ATP + H2O = carbamoyl phosphate + L-glutamate + 2 ADP + phosphate + 2 H(+). It carries out the reaction L-glutamine + H2O = L-glutamate + NH4(+). The protein operates within amino-acid biosynthesis; L-arginine biosynthesis; carbamoyl phosphate from bicarbonate: step 1/1. Its pathway is pyrimidine metabolism; UMP biosynthesis via de novo pathway; (S)-dihydroorotate from bicarbonate: step 1/3. In terms of biological role, small subunit of the glutamine-dependent carbamoyl phosphate synthetase (CPSase). CPSase catalyzes the formation of carbamoyl phosphate from the ammonia moiety of glutamine, carbonate, and phosphate donated by ATP, constituting the first step of 2 biosynthetic pathways, one leading to arginine and/or urea and the other to pyrimidine nucleotides. The small subunit (glutamine amidotransferase) binds and cleaves glutamine to supply the large subunit with the substrate ammonia. This is Carbamoyl phosphate synthase small chain from Streptococcus mutans serotype c (strain ATCC 700610 / UA159).